The sequence spans 432 residues: MQVSVETTQGLGRRVTITIAADSIETAVKSELVNVAKKVRIDGFRKGKVPMNIVAQRYGASVRQDVLGDLMSRNFIDAIIKEKINPAGAPTYVPGEYKLGEDFTYSVEFEVYPEVELQGLEAIEVEKPIVEVTDADVDGMLDTLRKQQATWKDKDGAVEAEDRVTIDFTGSVDGEEFEGGKASDFVLAMGQGRMIPGFEDGIKGHKAGEEFTIDVTFPEEYHAENLKGKAAKFAINLKKVEERELPELTAEFIKRFGVEDGSVEGLRAEVRKNMERELKSAIRNRVKSQAIEGLVKANDIDVPAALIDSEIDVLRRQAAQRFGGNEKQALELPRELFEEQAKRRVVVGLLLGEVIRTNELKADEERVKGLIEEMASAYEDPKEVIEFYSKNKELMDNMRNVALEEQAVEAVLAKAKVTEKETTFNELMNQQA.

The PPIase FKBP-type domain maps to 161–246 (EDRVTIDFTG…LKKVEERELP (86 aa)).

Belongs to the FKBP-type PPIase family. Tig subfamily. Homodimer and monomer. In vivo most of the ribosomes are in complex with monomeric TF. Uncomplexed TF, however, is in a monomer-dimer equilibrium with approximately two thirds of TF existing in a dimeric state.

It localises to the cytoplasm. It carries out the reaction [protein]-peptidylproline (omega=180) = [protein]-peptidylproline (omega=0). Involved in protein export. Acts as a chaperone by maintaining the newly synthesized protein in an open conformation. Functions as a peptidyl-prolyl cis-trans isomerase. The sequence is that of Trigger factor from Escherichia coli O139:H28 (strain E24377A / ETEC).